The chain runs to 70 residues: Conotoxin Ep11.12 (70 aa).

The N-terminal stretch at 1 to 26 (MMFRVTSVGCFLLVILSLNLVVLTNA) is a signal peptide. Disulfide bonds link Cys-27–Cys-41, Cys-34–Cys-46, Cys-40–Cys-50, and Cys-45–Cys-54. The residue at position 57 (Pro-57) is a Proline amide. Residues 61–70 (AKLREFFRQR) constitute a propeptide that is removed on maturation.

The protein belongs to the conotoxin I2 superfamily. Expressed by the venom duct.

It is found in the secreted. This is Conotoxin Ep11.12 from Conus episcopatus (Bishop's cone).